We begin with the raw amino-acid sequence, 367 residues long: Probable butyrate kinase (367 aa).

It belongs to the acetokinase family.

It is found in the cytoplasm. It catalyses the reaction butanoate + ATP = butanoyl phosphate + ADP. This Bacillus cereus (strain ATCC 10987 / NRS 248) protein is Probable butyrate kinase.